Consider the following 654-residue polypeptide: Tetratricopeptide repeat protein 30 homolog (654 aa).

TPR repeat units follow at residues 10–43 (EGHVTRTIYNLIKDKRYEDVIECITNIGEAANTR), 44–76 (AGLSTLGHCYYHAQKYEEAATCYEQLCQLAPKE), 143–176 (ADTLNDEGCLLYQADQHESAVQRFQAALQVGGFN), 178–210 (LVAYNVALAHFQRKQRAQALDYTSEIVERGVRN), 384–417 (LAAKVQEVRATNEQHALRDALKDYEQALELYLPV), 449–483 (AVWRLNAGHVLFMQGDKYNEAAAFYEPIVRQHSDD), and 533–566 (CIVNLVVGTLYCAKSNYEFGLTRIAHALEGGAGG).

This sequence belongs to the TTC30/dfy-1/fleer family.

The protein localises to the cell projection. Its subcellular location is the cilium. Functionally, required for polyglutamylation of axonemal tubulin in sensory cilia. Plays a role in anterograde intraflagellar transport (IFT), the process by which cilia precursors are transported from the base of the cilium to the site of their incorporation at the tip. This Drosophila pseudoobscura pseudoobscura (Fruit fly) protein is Tetratricopeptide repeat protein 30 homolog.